Consider the following 420-residue polypeptide: Gamma-glutamyl phosphate reductase (420 aa).

The protein belongs to the gamma-glutamyl phosphate reductase family.

It is found in the cytoplasm. The catalysed reaction is L-glutamate 5-semialdehyde + phosphate + NADP(+) = L-glutamyl 5-phosphate + NADPH + H(+). It functions in the pathway amino-acid biosynthesis; L-proline biosynthesis; L-glutamate 5-semialdehyde from L-glutamate: step 2/2. In terms of biological role, catalyzes the NADPH-dependent reduction of L-glutamate 5-phosphate into L-glutamate 5-semialdehyde and phosphate. The product spontaneously undergoes cyclization to form 1-pyrroline-5-carboxylate. This is Gamma-glutamyl phosphate reductase from Acidiphilium cryptum (strain JF-5).